A 185-amino-acid polypeptide reads, in one-letter code: Ribosome-recycling factor (185 aa).

This sequence belongs to the RRF family.

The protein localises to the cytoplasm. Its function is as follows. Responsible for the release of ribosomes from messenger RNA at the termination of protein biosynthesis. May increase the efficiency of translation by recycling ribosomes from one round of translation to another. The polypeptide is Ribosome-recycling factor (Pasteurella multocida (strain Pm70)).